A 276-amino-acid polypeptide reads, in one-letter code: Probable ABC transporter permease protein NosY (276 aa).

6 helical membrane-spanning segments follow: residues tryptophan 20 to alanine 40, isoleucine 55 to tyrosine 75, isoleucine 111 to valine 131, phenylalanine 146 to glycine 166, leucine 179 to leucine 199, and valine 251 to phenylalanine 271.

In terms of assembly, the complex may be composed of an ATP-binding protein (NosF), a transmembrane protein (NosY) and a solute-binding protein (NosD).

The protein localises to the cell inner membrane. Required for the assembly of the copper chromophores of nitrous oxide reductase. Could be part of the ABC transporter complex NosDFY. The sequence is that of Probable ABC transporter permease protein NosY from Stutzerimonas stutzeri (Pseudomonas stutzeri).